The following is a 232-amino-acid chain: Ribonuclease 3 (232 aa).

In terms of domain architecture, RNase III spans 10–135 (ALKIYEATGY…LIGAMYMDGG (126 aa)). Mg(2+) is bound at residue E48. D52 is an active-site residue. Mg(2+) contacts are provided by N121 and E124. Residue E124 is part of the active site. The DRBM domain occupies 161–230 (DPKTALQEWV…AKLMLKKITE (70 aa)).

Belongs to the ribonuclease III family. Homodimer. The cofactor is Mg(2+).

The protein localises to the cytoplasm. It carries out the reaction Endonucleolytic cleavage to 5'-phosphomonoester.. In terms of biological role, digests double-stranded RNA. Involved in the processing of primary rRNA transcript to yield the immediate precursors to the large and small rRNAs (23S and 16S). Processes some mRNAs, and tRNAs when they are encoded in the rRNA operon. Processes pre-crRNA and tracrRNA of type II CRISPR loci if present in the organism. The chain is Ribonuclease 3 from Anaplasma marginale (strain St. Maries).